We begin with the raw amino-acid sequence, 1603 residues long: Vitellogenin-4 (1603 aa).

An N-terminal signal peptide occupies residues 1-15 (MKSIIIASLVALAIA). Residues 24-685 (FSPKSEYVYK…EKNAFLPKEV (662 aa)) enclose the Vitellogenin domain. Asparagine 1266 is a glycosylation site (N-linked (GlcNAc...) asparagine). The region spanning 1306–1475 (ATCKVDQSEV…SYLLKNEECE (170 aa)) is the VWFD domain. Cystine bridges form between cysteine 1308–cysteine 1438 and cysteine 1330–cysteine 1474.

As to expression, expressed in the intestine of adult hermaphrodites.

It localises to the secreted. Its function is as follows. Precursor of the egg-yolk proteins that are sources of nutrients during embryonic development. Together with other vitellogenins, may play a role in modulating life-span, acting via induction of autophagy and lysosomal lipolysis. This is Vitellogenin-4 (vit-4) from Caenorhabditis elegans.